The primary structure comprises 488 residues: Protein nucleotidyltransferase YdiU (488 aa).

The ATP site is built by Gly91, Gly93, Arg94, Lys114, Asp126, Gly127, Arg177, and Arg184. Asp253 acts as the Proton acceptor in catalysis. The Mg(2+) site is built by Asn254 and Asp263. Asp263 contributes to the ATP binding site.

This sequence belongs to the SELO family. Mg(2+) serves as cofactor. Mn(2+) is required as a cofactor.

It catalyses the reaction L-seryl-[protein] + ATP = 3-O-(5'-adenylyl)-L-seryl-[protein] + diphosphate. The catalysed reaction is L-threonyl-[protein] + ATP = 3-O-(5'-adenylyl)-L-threonyl-[protein] + diphosphate. The enzyme catalyses L-tyrosyl-[protein] + ATP = O-(5'-adenylyl)-L-tyrosyl-[protein] + diphosphate. It carries out the reaction L-histidyl-[protein] + UTP = N(tele)-(5'-uridylyl)-L-histidyl-[protein] + diphosphate. It catalyses the reaction L-seryl-[protein] + UTP = O-(5'-uridylyl)-L-seryl-[protein] + diphosphate. The catalysed reaction is L-tyrosyl-[protein] + UTP = O-(5'-uridylyl)-L-tyrosyl-[protein] + diphosphate. In terms of biological role, nucleotidyltransferase involved in the post-translational modification of proteins. It can catalyze the addition of adenosine monophosphate (AMP) or uridine monophosphate (UMP) to a protein, resulting in modifications known as AMPylation and UMPylation. The polypeptide is Protein nucleotidyltransferase YdiU (Bacillus thuringiensis (strain Al Hakam)).